Consider the following 147-residue polypeptide: Bis(5'-adenosyl)-triphosphatase (147 aa).

One can recognise an HIT domain in the interval 2-109; the sequence is SFRFGQHLIK…LPRKAGDFHR (108 aa). Residues H8, N27, Q83, and 89 to 92 contribute to the substrate site; that span reads GQTV. A Histidine triad motif motif is present at residues 94–98; the sequence is HVHVH. Residue H96 is the Tele-AMP-histidine intermediate of the active site. H98 contributes to the substrate binding site. Position 114 is a phosphotyrosine; by SRC (Y114). Phosphotyrosine is present on Y145.

As to quaternary structure, homodimer. Interacts with UBE2I. Interacts with MDM2. Interacts with CTNNB1. Identified in a complex with CTNNB1 and LEF1. In terms of processing, phosphorylation at Tyr-114 by SRC is required for induction of apoptosis. Low levels expressed in all tissues tested. Phospho-FHIT observed in liver and kidney, but not in brain and lung. Phospho-FHIT undetected in all tested human tumor cell lines.

Its subcellular location is the cytoplasm. It is found in the mitochondrion. It localises to the nucleus. The catalysed reaction is P(1),P(3)-bis(5'-adenosyl) triphosphate + H2O = AMP + ADP + 2 H(+). It carries out the reaction adenosine 5'-phosphosulfate + H2O = sulfate + AMP + 2 H(+). It catalyses the reaction adenosine 5'-phosphosulfate + NH4(+) = adenosine 5'-phosphoramidate + sulfate + 2 H(+). The enzyme catalyses adenosine 5'-phosphoramidate + H2O = AMP + NH4(+). Its function is as follows. Possesses dinucleoside triphosphate hydrolase activity. Cleaves P(1)-P(3)-bis(5'-adenosyl) triphosphate (Ap3A) to yield AMP and ADP. Can also hydrolyze P(1)-P(4)-bis(5'-adenosyl) tetraphosphate (Ap4A), but has extremely low activity with ATP. Exhibits adenylylsulfatase activity, hydrolyzing adenosine 5'-phosphosulfate to yield AMP and sulfate. Exhibits adenosine 5'-monophosphoramidase activity, hydrolyzing purine nucleotide phosphoramidates with a single phosphate group such as adenosine 5'monophosphoramidate (AMP-NH2) to yield AMP and NH2. Exhibits adenylylsulfate-ammonia adenylyltransferase, catalyzing the ammonolysis of adenosine 5'-phosphosulfate resulting in the formation of adenosine 5'-phosphoramidate. Also catalyzes the ammonolysis of adenosine 5-phosphorofluoridate and diadenosine triphosphate. Modulates transcriptional activation by CTNNB1 and thereby contributes to regulate the expression of genes essential for cell proliferation and survival, such as CCND1 and BIRC5. Plays a role in the induction of apoptosis via SRC and AKT1 signaling pathways. Inhibits MDM2-mediated proteasomal degradation of p53/TP53 and thereby plays a role in p53/TP53-mediated apoptosis. Induction of apoptosis depends on the ability of FHIT to bind P(1)-P(3)-bis(5'-adenosyl) triphosphate or related compounds, but does not require its catalytic activity, it may in part come from the mitochondrial form, which sensitizes the low-affinity Ca(2+) transporters, enhancing mitochondrial calcium uptake. Functions as a tumor suppressor. The protein is Bis(5'-adenosyl)-triphosphatase (FHIT) of Homo sapiens (Human).